The following is a 552-amino-acid chain: Eukaryotic translation initiation factor 3 subunit D (552 aa).

The interval 288-302 (DFDLLTVSETANEPP) is RNA gate. The disordered stretch occupies residues 526–552 (PDGTFSSDEEDDDDDEEEEEEVEEEES). Over residues 532–552 (SDEEDDDDDEEEEEEVEEEES) the composition is skewed to acidic residues.

The protein belongs to the eIF-3 subunit D family. Component of the eukaryotic translation initiation factor 3 (eIF-3) complex, which is composed of 13 subunits: eif3a, eif3b, eif3c, eif3d, eif3e, eif3f, eif3g, eif3h, eif3i, eif3j, eif3k, eif3l and eif3m.

Its subcellular location is the cytoplasm. In terms of biological role, mRNA cap-binding component of the eukaryotic translation initiation factor 3 (eIF-3) complex, which is involved in protein synthesis of a specialized repertoire of mRNAs and, together with other initiation factors, stimulates binding of mRNA and methionyl-tRNAi to the 40S ribosome. The eIF-3 complex specifically targets and initiates translation of a subset of mRNAs involved in cell proliferation. In the eIF-3 complex, eif3d specifically recognizes and binds the 7-methylguanosine cap of a subset of mRNAs. This Xenopus tropicalis (Western clawed frog) protein is Eukaryotic translation initiation factor 3 subunit D (eif3d).